Consider the following 286-residue polypeptide: Ribose-5-phosphate isomerase (286 aa).

This sequence belongs to the ribose 5-phosphate isomerase family.

It is found in the cytoplasm. The catalysed reaction is aldehydo-D-ribose 5-phosphate = D-ribulose 5-phosphate. It participates in carbohydrate degradation; pentose phosphate pathway; D-ribose 5-phosphate from D-ribulose 5-phosphate (non-oxidative stage): step 1/1. The chain is Ribose-5-phosphate isomerase (RKI1) from Mycosarcoma maydis (Corn smut fungus).